A 58-amino-acid polypeptide reads, in one-letter code: Gene 72 protein (58 aa).

The protein is Gene 72 protein (72) of Mycobacterium phage L5 (Mycobacteriophage L5).